The sequence spans 578 residues: Thiol:disulfide interchange protein DsbD (578 aa).

An N-terminal signal peptide occupies residues 1–24 (MAQRFITLILLLCSILLAPHSAQA). Intrachain disulfides connect Cys-134–Cys-140 and Cys-195–Cys-317. The next 9 helical transmembrane spans lie at 183-203 (ALLI…YPLI), 219-239 (ILLL…LLGL), 256-276 (YVLI…FGLY), 297-317 (GGSL…CSPC), 318-338 (TTAP…MLAG), 339-359 (GGTL…VTLF), 370-390 (WMQY…VFLL), 397-417 (VWGL…AFIL), and 421-441 (AHSG…LIAA). The Thioredoxin domain occupies 438–578 (LIAARPLQDW…FLQHLQNLPR (141 aa)). Cys-493 and Cys-496 are disulfide-bonded.

This sequence belongs to the thioredoxin family. DsbD subfamily.

It is found in the cell inner membrane. It catalyses the reaction [protein]-dithiol + NAD(+) = [protein]-disulfide + NADH + H(+). The enzyme catalyses [protein]-dithiol + NADP(+) = [protein]-disulfide + NADPH + H(+). Its function is as follows. Required to facilitate the formation of correct disulfide bonds in some periplasmic proteins and for the assembly of the periplasmic c-type cytochromes. Acts by transferring electrons from cytoplasmic thioredoxin to the periplasm. This transfer involves a cascade of disulfide bond formation and reduction steps. The chain is Thiol:disulfide interchange protein DsbD from Yersinia enterocolitica serotype O:8 / biotype 1B (strain NCTC 13174 / 8081).